We begin with the raw amino-acid sequence, 662 residues long: Sodium/glucose cotransporter 1 (662 aa).

Over 1–24 the chain is Extracellular; that stretch reads MDSSTWSPATTATTEPLKPHERIR. Residues 25 to 47 traverse the membrane as a helical segment; it reads NAADISVIVIYFVVVMAVGLWAM. Residues 48–66 are Cytoplasmic-facing; the sequence is CSTNRGTVGGFFLAGRSMV. Residues 67–90 traverse the membrane as a helical segment; it reads WWPVGASLFASNIGSGHFVGLAGT. Over 91–95 the chain is Extracellular; sequence GAAAG. A helical membrane pass occupies residues 96-117; the sequence is IATGGFEWNALIWVVVLGWLFV. Topologically, residues 118–139 are cytoplasmic; the sequence is PIYIKAGVVTMPEYLRKRFGGK. The chain crosses the membrane as a helical span at residues 140–169; that stretch reads RIQVYLSILSLMLYIFTKISADIFSGAIFI. Topologically, residues 170–176 are extracellular; it reads TLALGLD. A helical transmembrane segment spans residues 177 to 193; it reads LYLAIFLLLAITGLYTI. The Cytoplasmic portion of the chain corresponds to 194–202; sequence TGGLAAVIY. The chain crosses the membrane as a helical span at residues 203 to 221; the sequence is TDTLQTAIMLVGSFILTGF. Over 222 to 275 the chain is Extracellular; that stretch reads AFHEVGGYDAFMEKYMNAIPTVISDGNITIKKECYTPRADSFHIFRDPLKGDLP. The N-linked (GlcNAc...) asparagine glycan is linked to Asn248. Disulfide bonds link Cys255–Cys511, Cys255–Cys608, Cys345–Cys351, Cys355–Cys361, and Cys517–Cys522. A helical membrane pass occupies residues 276–295; that stretch reads WPGLTFGLSILALWYWCTDQ. Residues 296–309 are Cytoplasmic-facing; that stretch reads VIVQRCLSAKNMSH. A helical transmembrane segment spans residues 310 to 331; sequence VKAGCVMCGYFKLLPMFVIVMP. The Extracellular portion of the chain corresponds to 332 to 375; sequence GMISRVLYTEKIACTVPSECEKYCGTKVGCSNIAYPTLVVELMP. The chain crosses the membrane as a helical span at residues 376–406; sequence NGLRGLMLSVMLASLMSSLTSIFNSASTLFT. Over 407–422 the chain is Cytoplasmic; that stretch reads MDVYTKIRKRASEKEL. A helical transmembrane segment spans residues 423 to 444; it reads MIAGRLFILVLIGISIAWVPIV. The Extracellular portion of the chain corresponds to 445 to 451; sequence QSAQSGQ. Residues 452–477 traverse the membrane as a helical segment; sequence LFDYIQSVTSYLGPPIAAVFLLAIFC. Topologically, residues 478–481 are cytoplasmic; it reads KRVN. The helical transmembrane segment at 482–504 threads the bilayer; it reads EEGAFWGLVIGCMIGLARMITEF. Topologically, residues 505-525 are extracellular; sequence AYGTGSCVEPSNCPTIICGVH. The chain crosses the membrane as a helical span at residues 526 to 547; it reads YLYFAIILFVISIIIVLVVSLF. Over 548 to 642 the chain is Cytoplasmic; it reads TKPIPDVHLY…TSEKPLWRTV (95 aa). Position 587 is a phosphothreonine (Thr587). A helical membrane pass occupies residues 643 to 660; it reads VNINGIILLTVAVFCHAY. Residues 661–662 are Extracellular-facing; it reads FA.

This sequence belongs to the sodium:solute symporter (SSF) (TC 2.A.21) family. Post-translationally, N-glycosylation is not necessary for the cotransporter function.

The protein resides in the apical cell membrane. The catalysed reaction is D-glucose(out) + 2 Na(+)(out) = D-glucose(in) + 2 Na(+)(in). It catalyses the reaction D-galactose(out) + 2 Na(+)(out) = D-galactose(in) + 2 Na(+)(in). With respect to regulation, enhanced by the interaction with PDZK1IP1/MAP17; but unlike SLC5A2/SGLT2, PDZK1IP1 is not essential for SLC5A1 transporter activity. Possibly modulated by cholesterol binding. Its function is as follows. Electrogenic Na(+)-coupled sugar symporter that actively transports D-glucose or D-galactose at the plasma membrane, with a Na(+) to sugar coupling ratio of 2:1. Transporter activity is driven by a transmembrane Na(+) electrochemical gradient set by the Na(+)/K(+) pump. Has a primary role in the transport of dietary monosaccharides from enterocytes to blood. Responsible for the absorption of D-glucose or D-galactose across the apical brush-border membrane of enterocytes, whereas basolateral exit is provided by GLUT2. Additionally, functions as a D-glucose sensor in enteroendocrine cells, triggering the secretion of the incretins GCG and GIP that control food intake and energy homeostasis. Together with SGLT2, functions in reabsorption of D-glucose from glomerular filtrate, playing a nonredundant role in the S3 segment of the proximal tubules. Transports D-glucose into endometrial epithelial cells, controlling glycogen synthesis and nutritional support for the embryo as well as the decidual transformation of endometrium prior to conception. Acts as a water channel enabling passive water transport in response to the osmotic gradient created upon sugar and Na(+) uptake. Has high water conductivity comparable to aquaporins and therefore is expected to play an important role in transepithelial water permeability, especially in the small intestine. This chain is Sodium/glucose cotransporter 1 (SLC5A1), found in Sus scrofa (Pig).